The chain runs to 241 residues: Chaperone protein FimC (241 aa).

The N-terminal stretch at 1–36 (MSNKNVNVRKSQEITFCLLAGILMFMAMMVAGRAEA) is a signal peptide.

The protein belongs to the periplasmic pilus chaperone family.

It is found in the periplasm. Functionally, required for the biogenesis of type 1 fimbriae. Binds and interact with FimH. This is Chaperone protein FimC (fimC) from Escherichia coli (strain K12).